The primary structure comprises 96 residues: Phosphoribosyl-ATP pyrophosphatase (96 aa).

The protein belongs to the PRA-PH family.

It localises to the cytoplasm. It carries out the reaction 1-(5-phospho-beta-D-ribosyl)-ATP + H2O = 1-(5-phospho-beta-D-ribosyl)-5'-AMP + diphosphate + H(+). It functions in the pathway amino-acid biosynthesis; L-histidine biosynthesis; L-histidine from 5-phospho-alpha-D-ribose 1-diphosphate: step 2/9. The polypeptide is Phosphoribosyl-ATP pyrophosphatase (Methanococcus maripaludis (strain DSM 14266 / JCM 13030 / NBRC 101832 / S2 / LL)).